The sequence spans 475 residues: 23S rRNA (uracil(1939)-C(5))-methyltransferase RlmD (475 aa).

The TRAM domain maps to 1–76; it reads MHRGDKPVNI…SRFSKAKVRE (76 aa). The [4Fe-4S] cluster site is built by cysteine 89, cysteine 95, cysteine 98, and cysteine 178. 6 residues coordinate S-adenosyl-L-methionine: glutamine 299, phenylalanine 328, asparagine 333, glutamate 349, aspartate 377, and aspartate 398. The active-site Nucleophile is the cysteine 431.

It belongs to the class I-like SAM-binding methyltransferase superfamily. RNA M5U methyltransferase family. RlmD subfamily.

It catalyses the reaction uridine(1939) in 23S rRNA + S-adenosyl-L-methionine = 5-methyluridine(1939) in 23S rRNA + S-adenosyl-L-homocysteine + H(+). Functionally, catalyzes the formation of 5-methyl-uridine at position 1939 (m5U1939) in 23S rRNA. The sequence is that of 23S rRNA (uracil(1939)-C(5))-methyltransferase RlmD from Polynucleobacter necessarius subsp. necessarius (strain STIR1).